Consider the following 380-residue polypeptide: Succinyl-diaminopimelate desuccinylase (380 aa).

Zn(2+) is bound at residue H70. The active site involves D72. Position 103 (D103) interacts with Zn(2+). Residue E137 is the Proton acceptor of the active site. Positions 138, 166, and 352 each coordinate Zn(2+).

The protein belongs to the peptidase M20A family. DapE subfamily. In terms of assembly, homodimer. It depends on Zn(2+) as a cofactor. The cofactor is Co(2+).

The catalysed reaction is N-succinyl-(2S,6S)-2,6-diaminopimelate + H2O = (2S,6S)-2,6-diaminopimelate + succinate. Its pathway is amino-acid biosynthesis; L-lysine biosynthesis via DAP pathway; LL-2,6-diaminopimelate from (S)-tetrahydrodipicolinate (succinylase route): step 3/3. Functionally, catalyzes the hydrolysis of N-succinyl-L,L-diaminopimelic acid (SDAP), forming succinate and LL-2,6-diaminopimelate (DAP), an intermediate involved in the bacterial biosynthesis of lysine and meso-diaminopimelic acid, an essential component of bacterial cell walls. The polypeptide is Succinyl-diaminopimelate desuccinylase (Azoarcus sp. (strain BH72)).